Consider the following 564-residue polypeptide: Pestheic acid cluster transcriptional regulator 3 (564 aa).

Residues 11-38 constitute a DNA-binding region (zn(2)-C6 fungal-type); the sequence is CWTCRLRRKKCDEGKPECTTCQALSITC. The interval 71-123 is disordered; that stretch reads RTSSRYRVPPGQKANPKLAPKVHAAASTPSTNTSHSTETTPPSDNGFYDTAES. The segment covering 97–113 has biased composition (polar residues); it reads STPSTNTSHSTETTPPS.

Its subcellular location is the nucleus. In terms of biological role, transcription factor that, with ptaR1 and ptaR2, coregulates the expression of the gene cluster that mediates the biosynthesis of pestheic acid, a diphenyl ether which is a biosynthetic precursor of the unique chloropupukeananes. This chain is Pestheic acid cluster transcriptional regulator 3, found in Pestalotiopsis fici (strain W106-1 / CGMCC3.15140).